The sequence spans 284 residues: Diaminopimelate epimerase (284 aa).

Substrate contacts are provided by asparagine 20, glutamine 53, and asparagine 73. Cysteine 82 (proton donor) is an active-site residue. Substrate is bound by residues 83 to 84 (GN), asparagine 167, asparagine 200, and 218 to 219 (ER). Catalysis depends on cysteine 227, which acts as the Proton acceptor. A substrate-binding site is contributed by 228 to 229 (GS).

Belongs to the diaminopimelate epimerase family. Homodimer.

Its subcellular location is the cytoplasm. The enzyme catalyses (2S,6S)-2,6-diaminopimelate = meso-2,6-diaminopimelate. It functions in the pathway amino-acid biosynthesis; L-lysine biosynthesis via DAP pathway; DL-2,6-diaminopimelate from LL-2,6-diaminopimelate: step 1/1. In terms of biological role, catalyzes the stereoinversion of LL-2,6-diaminopimelate (L,L-DAP) to meso-diaminopimelate (meso-DAP), a precursor of L-lysine and an essential component of the bacterial peptidoglycan. The sequence is that of Diaminopimelate epimerase from Xylella fastidiosa (strain M23).